Reading from the N-terminus, the 331-residue chain is UBX domain-containing protein 2B (331 aa).

Disordered stretches follow at residues 1–26 (MAEG…SARD) and 40–65 (KCKS…QRFY). At alanine 2 the chain carries N-acetylalanine. Serine 56 is modified (phosphoserine). Threonine 59 bears the Phosphothreonine mark. Residue serine 66 is modified to Phosphoserine. Residues 141–206 (DVQILLKLWS…MEDHQDQEYI (66 aa)) form the SEP domain. Residues serine 231, serine 234, and serine 235 each carry the phosphoserine modification. The UBX domain maps to 252–329 (DSVPTTKIQI…DILNTVLLQQ (78 aa)).

The protein belongs to the NSFL1C family. In terms of assembly, interacts with VCP. Does not bind ubiquitin.

It is found in the nucleus. The protein resides in the cytoplasm. Its subcellular location is the cytosol. The protein localises to the endoplasmic reticulum. It localises to the golgi apparatus. It is found in the cytoskeleton. The protein resides in the microtubule organizing center. Its subcellular location is the centrosome. Its function is as follows. Adapter protein required for Golgi and endoplasmic reticulum biogenesis. Involved in Golgi and endoplasmic reticulum maintenance during interphase and in their reassembly at the end of mitosis. The complex formed with VCP has membrane fusion activity; membrane fusion activity requires USO1-GOLGA2 tethering and BET1L. VCPIP1 is also required, but not its deubiquitinating activity. Together with NSFL1C/p47, regulates the centrosomal levels of kinase AURKA/Aurora A during mitotic progression by promoting AURKA removal from centrosomes in prophase. Also, regulates spindle orientation during mitosis. The polypeptide is UBX domain-containing protein 2B (UBXN2B) (Homo sapiens (Human)).